The chain runs to 156 residues: Ribosome maturation factor RimP (156 aa).

This sequence belongs to the RimP family.

The protein localises to the cytoplasm. Functionally, required for maturation of 30S ribosomal subunits. This chain is Ribosome maturation factor RimP, found in Lysinibacillus sphaericus (strain C3-41).